The following is a 152-amino-acid chain: Anaerobic nitrite reductase SYMA (152 aa).

A Globin domain is found at 2 to 151 (ALTERQEALL…LVATIKAEMK (150 aa)). Positions 35–39 (EAAPE) match the Homodimerization motif. Ser45, Lys59, His63, Arg93, and His98 together coordinate heme b. Residues 105 to 117 (DPHFEVMKGALLG) carry the Homodimerization motif.

It belongs to the plant globin family. As to quaternary structure, homodimer. Heme b serves as cofactor. Root nodules.

The protein localises to the cytoplasm. Its subcellular location is the nucleus. The enzyme catalyses Fe(III)-heme b-[protein] + nitric oxide + H2O = Fe(II)-heme b-[protein] + nitrite + 2 H(+). Functionally, phytoglobin that reduces nitrite to nitric oxide (NO) under anoxic conditions (e.g. during flooding or in waterlogged soil) and upon root nodulation. Required for general plant development and during nodulation, especially for the onset of symbiosis. Monitors nitric oxide (NO) levels during early phase of the nitrogen-fixing symbiosis and buffers oxygen in functioning nodules. May not function as an oxygen storage or transport protein. Has an unusually high affinity for O(2) through a hexacoordinate heme iron because of a very low dissociation constant. This Casuarina glauca (Swamp oak) protein is Anaerobic nitrite reductase SYMA.